Reading from the N-terminus, the 125-residue chain is uncharacterized protein (125 aa).

This is an uncharacterized protein from Saccharomyces cerevisiae (strain ATCC 204508 / S288c) (Baker's yeast).